We begin with the raw amino-acid sequence, 215 residues long: Cytochrome b6 (215 aa).

The chain crosses the membrane as a helical span at residues 32-52; it reads IFYCLGGITLTCFLVQVATGF. Cys-35 is a heme c binding site. Heme b-binding residues include His-86 and His-100. Helical transmembrane passes span 90–110, 116–136, and 186–206; these read ASMM…TGGF, LTWV…VTGY, and LHTF…FLMI. Heme b-binding residues include His-187 and His-202.

This sequence belongs to the cytochrome b family. PetB subfamily. In terms of assembly, the 4 large subunits of the cytochrome b6-f complex are cytochrome b6, subunit IV (17 kDa polypeptide, PetD), cytochrome f and the Rieske protein, while the 4 small subunits are PetG, PetL, PetM and PetN. The complex functions as a dimer. The cofactor is heme b. Requires heme c as cofactor.

It localises to the plastid. Its subcellular location is the chloroplast thylakoid membrane. Its function is as follows. Component of the cytochrome b6-f complex, which mediates electron transfer between photosystem II (PSII) and photosystem I (PSI), cyclic electron flow around PSI, and state transitions. The sequence is that of Cytochrome b6 from Physcomitrium patens (Spreading-leaved earth moss).